Here is a 409-residue protein sequence, read N- to C-terminus: Probable ATP-dependent RNA helicase MG308 homolog (409 aa).

In terms of domain architecture, Helicase ATP-binding spans 26-179 (VFKVWPRQNV…RKQVAPLTVV (154 aa)). Residue 39-46 (AETGSGKT) participates in ATP binding. The DEVD box signature appears at 126–129 (DEVD). The region spanning 190-349 (LVKHFLLNLN…SVHLERDGTL (160 aa)) is the Helicase C-terminal domain.

This sequence belongs to the DEAD box helicase family.

The enzyme catalyses ATP + H2O = ADP + phosphate + H(+). The protein is Probable ATP-dependent RNA helicase MG308 homolog of Mycoplasma pneumoniae (strain ATCC 29342 / M129 / Subtype 1) (Mycoplasmoides pneumoniae).